Consider the following 234-residue polypeptide: Adenosine 5'-phosphosulfate reductase (234 aa).

The [4Fe-4S] cluster site is built by cysteine 120, cysteine 121, cysteine 203, and cysteine 206. The Nucleophile; cysteine thiosulfonate intermediate role is filled by cysteine 229.

Belongs to the PAPS reductase family. CysH subfamily. It depends on [4Fe-4S] cluster as a cofactor.

The protein localises to the cytoplasm. It catalyses the reaction [thioredoxin]-disulfide + sulfite + AMP + 2 H(+) = adenosine 5'-phosphosulfate + [thioredoxin]-dithiol. The protein operates within sulfur metabolism; hydrogen sulfide biosynthesis; sulfite from sulfate. Functionally, catalyzes the formation of sulfite from adenosine 5'-phosphosulfate (APS) using thioredoxin as an electron donor. The chain is Adenosine 5'-phosphosulfate reductase from Bacillus mycoides (strain KBAB4) (Bacillus weihenstephanensis).